We begin with the raw amino-acid sequence, 632 residues long: Biosynthetic arginine decarboxylase (632 aa).

At K101 the chain carries N6-(pyridoxal phosphate)lysine. 281–291 lines the substrate pocket; that stretch reads FDVGGGLGVDY.

The protein belongs to the Orn/Lys/Arg decarboxylase class-II family. SpeA subfamily. It depends on Mg(2+) as a cofactor. Pyridoxal 5'-phosphate is required as a cofactor.

The enzyme catalyses L-arginine + H(+) = agmatine + CO2. The protein operates within amine and polyamine biosynthesis; agmatine biosynthesis; agmatine from L-arginine: step 1/1. In terms of biological role, catalyzes the biosynthesis of agmatine from arginine. The chain is Biosynthetic arginine decarboxylase from Salmonella agona (strain SL483).